A 257-amino-acid polypeptide reads, in one-letter code: Probable amino-acid ABC transporter-binding protein HI_1080 (257 aa).

The N-terminal stretch at 1–23 (MKKLLFTTALLTGAIAFSTFSHA) is a signal peptide.

It belongs to the bacterial solute-binding protein 3 family.

It is found in the periplasm. Functionally, probably part of a binding-protein-dependent transport system for an amino acid. This chain is Probable amino-acid ABC transporter-binding protein HI_1080, found in Haemophilus influenzae (strain ATCC 51907 / DSM 11121 / KW20 / Rd).